We begin with the raw amino-acid sequence, 232 residues long: 2-C-methyl-D-erythritol 4-phosphate cytidylyltransferase (232 aa).

This sequence belongs to the IspD/TarI cytidylyltransferase family. IspD subfamily.

It carries out the reaction 2-C-methyl-D-erythritol 4-phosphate + CTP + H(+) = 4-CDP-2-C-methyl-D-erythritol + diphosphate. It participates in isoprenoid biosynthesis; isopentenyl diphosphate biosynthesis via DXP pathway; isopentenyl diphosphate from 1-deoxy-D-xylulose 5-phosphate: step 2/6. Catalyzes the formation of 4-diphosphocytidyl-2-C-methyl-D-erythritol from CTP and 2-C-methyl-D-erythritol 4-phosphate (MEP). The polypeptide is 2-C-methyl-D-erythritol 4-phosphate cytidylyltransferase (Neorickettsia sennetsu (strain ATCC VR-367 / Miyayama) (Ehrlichia sennetsu)).